Reading from the N-terminus, the 56-residue chain is Ovomucoid (56 aa).

A Kazal-like domain is found at 6 to 56 (VDCSEYPKPACTLEYRPLCGSDNKTYGNKCNFCNAVVESNGTLTLSHFGKC). Cystine bridges form between cysteine 8-cysteine 38, cysteine 16-cysteine 35, and cysteine 24-cysteine 56. N-linked (GlcNAc...) asparagine glycosylation is present at asparagine 45.

Its subcellular location is the secreted. The protein is Ovomucoid of Meleagris ocellata (Ocellated turkey).